The chain runs to 194 residues: MPKVGMREIRRAQLIDATLRSIDEAGLPGTTLASVAQRANISTGIVSHYFGDKDGLLEATMRHVLRDLWSATTHRRVAARKDPRSRLRAIVAANFDDTQVSAPVMKTWLAFWSQSMHDPMLKRLQHVNTRRLHSNLCAEFAKALPRTQAREAASGLAALIDGLWLRGALAGGPIDTRAALKLAHDYIDLLLASD.

An HTH tetR-type domain is found at 8–68; the sequence is EIRRAQLIDA…ATMRHVLRDL (61 aa). The segment at residues 31 to 50 is a DNA-binding region (H-T-H motif); that stretch reads TLASVAQRANISTGIVSHYF.

The protein operates within amine and polyamine biosynthesis; betaine biosynthesis via choline pathway [regulation]. Functionally, repressor involved in the biosynthesis of the osmoprotectant glycine betaine. It represses transcription of the choline transporter BetT and the genes of BetAB involved in the synthesis of glycine betaine. This is HTH-type transcriptional regulator BetI from Burkholderia lata (strain ATCC 17760 / DSM 23089 / LMG 22485 / NCIMB 9086 / R18194 / 383).